The sequence spans 413 residues: High zinc activated nuclear receptor protein (413 aa).

Residues 11-86 (LGNCKICLQR…EGMKIELVQL (76 aa)) constitute a DNA-binding region (nuclear receptor). NR C4-type zinc fingers lie at residues 14 to 34 (CKIC…CRAC) and 50 to 69 (CKEK…CRSC). The required for zinc-binding stretch occupies residues 101-412 (SIDPLFTPNV…TSQCIVHTKN (312 aa)). The NR LBD domain maps to 135 to 396 (QMTSGYAMFL…VCCKNFKEDA (262 aa)).

This sequence belongs to the nuclear hormone receptor family. In terms of tissue distribution, weakly expressed in intestinal cells in the absence of zinc supplementation. Upon zinc supplementation, accumulates in alimentary tract cells, and it is mainly expressed in the intestine.

It is found in the nucleus. Its subcellular location is the cytoplasm. In terms of biological role, nuclear receptor transcription factor that binds to DNA enhancer elements to promote the transcription of genes required to maintain micronutrient homeostasis. Direct binding to its ligand zinc allows for nuclear accumulation and activation, which thereby induces the transcription of genes required to promote the storage and detoxification of excess dietary zinc. This in turn, allows for internal zinc levels to be detected and regulated. The protein is High zinc activated nuclear receptor protein of Caenorhabditis elegans.